The sequence spans 143 residues: UPF0651 protein P31B10.02, mitochondrial (143 aa).

The Oxidoreductase-like domain occupies 48–93; the sequence is IYDGIRVPPKPEEPLNCCQSGCAICVWDVYADDLEEYNRARRKAKR.

This sequence belongs to the UPF0651 family.

It is found in the mitochondrion. The chain is UPF0651 protein P31B10.02, mitochondrial from Schizosaccharomyces pombe (strain 972 / ATCC 24843) (Fission yeast).